Reading from the N-terminus, the 84-residue chain is MDIRKTYVIIFFVGILTISFSSYNIGQTRLVVIQEQEPHCIGPCEIAFGNRPCNEECTSQQYAYGFCDYQTKGEDNPQCCCYTS.

A signal peptide spans 1–21; the sequence is MDIRKTYVIIFFVGILTISFS. 4 disulfides stabilise this stretch: cysteine 40–cysteine 81, cysteine 44–cysteine 67, cysteine 53–cysteine 79, and cysteine 57–cysteine 80.

The protein belongs to the DEFL family.

Its subcellular location is the secreted. The chain is Putative defensin-like protein 63 from Arabidopsis thaliana (Mouse-ear cress).